Here is a 389-residue protein sequence, read N- to C-terminus: Acetyl-CoA decarbonylase/synthase complex subunit delta (389 aa).

The protein belongs to the CdhD family. In terms of assembly, heterodimer of delta and gamma chains. The ACDS complex is made up of alpha, epsilon, beta, gamma and delta chains with a probable stoichiometry of (alpha(2)epsilon(2))(4)-beta(8)-(gamma(1)delta(1))(8).

Functionally, part of a complex that catalyzes the reversible cleavage of acetyl-CoA, allowing autotrophic growth from CO(2). Probably maintains the overall quaternary structure of the ACDS complex. This Methanothermobacter thermautotrophicus (strain ATCC 29096 / DSM 1053 / JCM 10044 / NBRC 100330 / Delta H) (Methanobacterium thermoautotrophicum) protein is Acetyl-CoA decarbonylase/synthase complex subunit delta.